Reading from the N-terminus, the 330-residue chain is Carbonic anhydrase 1 (330 aa).

The interval 1–109 (MSTASAFAIN…AAARIDQITA (109 aa)) is chloroplast transit peptide-like.

This sequence belongs to the beta-class carbonic anhydrase family. Homohexamer.

It is found in the cytoplasm. The catalysed reaction is hydrogencarbonate + H(+) = CO2 + H2O. Reversible hydration of carbon dioxide. The sequence is that of Carbonic anhydrase 1 from Flaveria linearis (Narrowleaf yellowtops).